We begin with the raw amino-acid sequence, 190 residues long: Segregation and condensation protein B (190 aa).

It belongs to the ScpB family. In terms of assembly, homodimer. Homodimerization may be required to stabilize the binding of ScpA to the Smc head domains. Component of a cohesin-like complex composed of ScpA, ScpB and the Smc homodimer, in which ScpA and ScpB bind to the head domain of Smc. The presence of the three proteins is required for the association of the complex with DNA.

It localises to the cytoplasm. Participates in chromosomal partition during cell division. May act via the formation of a condensin-like complex containing Smc and ScpA that pull DNA away from mid-cell into both cell halves. The chain is Segregation and condensation protein B from Bacillus cereus (strain G9842).